A 135-amino-acid polypeptide reads, in one-letter code: DNA-directed RNA polymerase subunit omega (135 aa).

Residues alanine 107–valine 135 are disordered. Residues glutamine 112–valine 135 are compositionally biased toward acidic residues.

The protein belongs to the RNA polymerase subunit omega family. As to quaternary structure, the RNAP catalytic core consists of 2 alpha, 1 beta, 1 beta' and 1 omega subunit. When a sigma factor is associated with the core the holoenzyme is formed, which can initiate transcription.

The catalysed reaction is RNA(n) + a ribonucleoside 5'-triphosphate = RNA(n+1) + diphosphate. Functionally, promotes RNA polymerase assembly. Latches the N- and C-terminal regions of the beta' subunit thereby facilitating its interaction with the beta and alpha subunits. In Wolbachia pipientis wMel, this protein is DNA-directed RNA polymerase subunit omega.